A 400-amino-acid polypeptide reads, in one-letter code: CinA-like protein (400 aa).

Belongs to the CinA family.

The protein is CinA-like protein of Shigella flexneri.